A 487-amino-acid polypeptide reads, in one-letter code: Malonate-semialdehyde dehydrogenase 2 (487 aa).

NAD(+) contacts are provided by Phe-154, Lys-178, Glu-181, Arg-182, and Ser-231. Cys-286 serves as the catalytic Nucleophile. An NAD(+)-binding site is contributed by Glu-386.

It belongs to the aldehyde dehydrogenase family. IolA subfamily. As to quaternary structure, homotetramer.

The catalysed reaction is 3-oxopropanoate + NAD(+) + CoA + H2O = hydrogencarbonate + acetyl-CoA + NADH + H(+). It carries out the reaction 2-methyl-3-oxopropanoate + NAD(+) + CoA + H2O = propanoyl-CoA + hydrogencarbonate + NADH + H(+). It functions in the pathway polyol metabolism; myo-inositol degradation into acetyl-CoA; acetyl-CoA from myo-inositol: step 7/7. Functionally, catalyzes the oxidation of malonate semialdehyde (MSA) and methylmalonate semialdehyde (MMSA) into acetyl-CoA and propanoyl-CoA, respectively. Is involved in a myo-inositol catabolic pathway. Bicarbonate, and not CO2, is the end-product of the enzymatic reaction. This chain is Malonate-semialdehyde dehydrogenase 2, found in Bacillus thuringiensis subsp. konkukian (strain 97-27).